The primary structure comprises 341 residues: Putative UPF0607 protein ENSP00000381514 (341 aa).

Positions 78 to 89 (AEEPKEATEVKD) are enriched in basic and acidic residues. 2 disordered regions span residues 78 to 131 (AEEP…NPRP) and 216 to 282 (GLLT…KLPC). Residues 108-127 (EAASTSRPLETQGNLTSSWY) show a composition bias toward polar residues. Residues 243–252 (AGHRSRKRKL) are compositionally biased toward basic residues.

It belongs to the UPF0607 family.

The chain is Putative UPF0607 protein ENSP00000381514 from Homo sapiens (Human).